Here is a 128-residue protein sequence, read N- to C-terminus: Glycine cleavage system H protein (128 aa).

The 83-residue stretch at 24 to 106 folds into the Lipoyl-binding domain; that stretch reads LVRIGISEFA…HGEGWLLIIR (83 aa). At Lys-65 the chain carries N6-lipoyllysine.

Belongs to the GcvH family. The glycine cleavage system is composed of four proteins: P, T, L and H. The cofactor is (R)-lipoate.

Functionally, the glycine cleavage system catalyzes the degradation of glycine. The H protein shuttles the methylamine group of glycine from the P protein to the T protein. The protein is Glycine cleavage system H protein of Prochlorococcus marinus (strain NATL1A).